A 287-amino-acid polypeptide reads, in one-letter code: Ribosomal RNA-processing protein 8 (287 aa).

Residues 1-62 are disordered; that stretch reads MTTEENKTSR…SAPSKRPKPS (62 aa). The segment covering 9–21 has biased composition (basic residues); that stretch reads SRNRKRKRQRNPK. Positions 35 to 46 are enriched in basic and acidic residues; the sequence is QNEKKNQRDTKN. The S-adenosyl-L-methionine site is built by His-107, Gly-142, Asp-160, Asp-172, Met-173, and Cys-189.

The protein belongs to the methyltransferase superfamily. RRP8 family.

It is found in the nucleus. Its subcellular location is the nucleolus. Probable methyltransferase required to silence rDNA. The protein is Ribosomal RNA-processing protein 8 of Arabidopsis thaliana (Mouse-ear cress).